Consider the following 608-residue polypeptide: Putative multicopper oxidase GMC1 (608 aa).

3 Plastocyanin-like domains span residues 51–163, 243–374, and 421–548; these read INGY…LIVE, LING…ELYR, and ERTF…FEVP. Cu cation-binding residues include His100, His102, His145, and His147. Cu cation-binding residues include His452, His455, His457, His530, Cys531, His532, and His536.

Belongs to the multicopper oxidase family. Cu cation serves as cofactor.

Could be an iron transport multicopper oxidase, which is required for Fe(2+) high affinity uptake. May be required to oxidize Fe(2+) and release it from the transporter. Essential component of copper-dependent iron transport. Involved in meiotic prophase and synaptonemal complex (SC) assembly. This is Putative multicopper oxidase GMC1 (GMC1) from Saccharomyces cerevisiae (strain ATCC 204508 / S288c) (Baker's yeast).